Consider the following 199-residue polypeptide: Elongation factor Ts (199 aa).

Residues 82–85 are involved in Mg(2+) ion dislocation from EF-Tu; the sequence is TDFV.

This sequence belongs to the EF-Ts family.

Its subcellular location is the cytoplasm. In terms of biological role, associates with the EF-Tu.GDP complex and induces the exchange of GDP to GTP. It remains bound to the aminoacyl-tRNA.EF-Tu.GTP complex up to the GTP hydrolysis stage on the ribosome. The sequence is that of Elongation factor Ts from Leptospira interrogans serogroup Icterohaemorrhagiae serovar copenhageni (strain Fiocruz L1-130).